The sequence spans 101 residues: NAD(P)H-quinone oxidoreductase subunit 4L, chloroplastic (101 aa).

Transmembrane regions (helical) follow at residues M2–I22, M32–F52, and I61–V81.

This sequence belongs to the complex I subunit 4L family. As to quaternary structure, NDH is composed of at least 16 different subunits, 5 of which are encoded in the nucleus.

The protein localises to the plastid. Its subcellular location is the chloroplast thylakoid membrane. It catalyses the reaction a plastoquinone + NADH + (n+1) H(+)(in) = a plastoquinol + NAD(+) + n H(+)(out). The catalysed reaction is a plastoquinone + NADPH + (n+1) H(+)(in) = a plastoquinol + NADP(+) + n H(+)(out). Functionally, NDH shuttles electrons from NAD(P)H:plastoquinone, via FMN and iron-sulfur (Fe-S) centers, to quinones in the photosynthetic chain and possibly in a chloroplast respiratory chain. The immediate electron acceptor for the enzyme in this species is believed to be plastoquinone. Couples the redox reaction to proton translocation, and thus conserves the redox energy in a proton gradient. The polypeptide is NAD(P)H-quinone oxidoreductase subunit 4L, chloroplastic (Piper cenocladum (Ant piper)).